We begin with the raw amino-acid sequence, 277 residues long: Urease accessory protein UreD (277 aa).

The segment at 1-20 is disordered; the sequence is MRQTAQEDASPAPMQRAHGT.

This sequence belongs to the UreD family. UreD, UreF and UreG form a complex that acts as a GTP-hydrolysis-dependent molecular chaperone, activating the urease apoprotein by helping to assemble the nickel containing metallocenter of UreC. The UreE protein probably delivers the nickel.

The protein localises to the cytoplasm. In terms of biological role, required for maturation of urease via the functional incorporation of the urease nickel metallocenter. The polypeptide is Urease accessory protein UreD (Chelativorans sp. (strain BNC1)).